The following is a 417-amino-acid chain: Gamma-glutamyl phosphate reductase (417 aa).

Belongs to the gamma-glutamyl phosphate reductase family.

Its subcellular location is the cytoplasm. It catalyses the reaction L-glutamate 5-semialdehyde + phosphate + NADP(+) = L-glutamyl 5-phosphate + NADPH + H(+). Its pathway is amino-acid biosynthesis; L-proline biosynthesis; L-glutamate 5-semialdehyde from L-glutamate: step 2/2. In terms of biological role, catalyzes the NADPH-dependent reduction of L-glutamate 5-phosphate into L-glutamate 5-semialdehyde and phosphate. The product spontaneously undergoes cyclization to form 1-pyrroline-5-carboxylate. The chain is Gamma-glutamyl phosphate reductase from Desulfitobacterium hafniense (strain DSM 10664 / DCB-2).